We begin with the raw amino-acid sequence, 273 residues long: Putative pyruvate, phosphate dikinase regulatory protein (273 aa).

Position 153-160 (153-160) interacts with ADP; sequence GISRTSKT.

The protein belongs to the pyruvate, phosphate/water dikinase regulatory protein family. PDRP subfamily.

The enzyme catalyses N(tele)-phospho-L-histidyl/L-threonyl-[pyruvate, phosphate dikinase] + ADP = N(tele)-phospho-L-histidyl/O-phospho-L-threonyl-[pyruvate, phosphate dikinase] + AMP + H(+). The catalysed reaction is N(tele)-phospho-L-histidyl/O-phospho-L-threonyl-[pyruvate, phosphate dikinase] + phosphate + H(+) = N(tele)-phospho-L-histidyl/L-threonyl-[pyruvate, phosphate dikinase] + diphosphate. In terms of biological role, bifunctional serine/threonine kinase and phosphorylase involved in the regulation of the pyruvate, phosphate dikinase (PPDK) by catalyzing its phosphorylation/dephosphorylation. This is Putative pyruvate, phosphate dikinase regulatory protein from Rhizobium etli (strain CIAT 652).